The following is a 403-amino-acid chain: S-adenosylmethionine synthase (403 aa).

H16 contributes to the ATP binding site. Residue D18 coordinates Mg(2+). Residue E44 participates in K(+) binding. Residues E57 and Q100 each coordinate L-methionine. The interval 100–110 is flexible loop; that stretch reads QSSDIAQGVDR. Residues 165-167, D242, 248-249, A265, and K269 each bind ATP; these read DAK and RK. Position 242 (D242) interacts with L-methionine. Residue K273 coordinates L-methionine.

It belongs to the AdoMet synthase family. In terms of assembly, homotetramer; dimer of dimers. Mg(2+) is required as a cofactor. It depends on K(+) as a cofactor.

The protein resides in the cytoplasm. It carries out the reaction L-methionine + ATP + H2O = S-adenosyl-L-methionine + phosphate + diphosphate. It participates in amino-acid biosynthesis; S-adenosyl-L-methionine biosynthesis; S-adenosyl-L-methionine from L-methionine: step 1/1. In terms of biological role, catalyzes the formation of S-adenosylmethionine (AdoMet) from methionine and ATP. The overall synthetic reaction is composed of two sequential steps, AdoMet formation and the subsequent tripolyphosphate hydrolysis which occurs prior to release of AdoMet from the enzyme. The protein is S-adenosylmethionine synthase of Nitrosococcus oceani (strain ATCC 19707 / BCRC 17464 / JCM 30415 / NCIMB 11848 / C-107).